Consider the following 176-residue polypeptide: Outer membrane protein assembly factor BamE (176 aa).

A signal peptide spans 1–21 (MQNAKLMLTCLAFAGLAALAG). The N-palmitoyl cysteine moiety is linked to residue cysteine 22. Cysteine 22 carries S-diacylglycerol cysteine lipidation. A disordered region spans residues 121 to 176 (KEGSTTVTQPADQQKPEAQKEEPPKPGSTLEQLQREVDEAQPVPVPTPEPLDPSPQ). Over residues 123–132 (GSTTVTQPAD) the composition is skewed to polar residues. The segment covering 134–144 (QKPEAQKEEPP) has biased composition (basic and acidic residues). Residues 163–176 (VPVPTPEPLDPSPQ) are compositionally biased toward pro residues.

Belongs to the BamE family. As to quaternary structure, part of the Bam complex.

It is found in the cell outer membrane. Its function is as follows. Part of the outer membrane protein assembly complex, which is involved in assembly and insertion of beta-barrel proteins into the outer membrane. May have a structural role in maintaining the cell envelope integrity. This chain is Outer membrane protein assembly factor BamE, found in Pseudomonas aeruginosa (strain ATCC 15692 / DSM 22644 / CIP 104116 / JCM 14847 / LMG 12228 / 1C / PRS 101 / PAO1).